A 525-amino-acid chain; its full sequence is MLRTILDAPQRLLKEGRASRQLVLVVVFVALLLDNMLFTVVVPIVPTFLYDMEFKEVNSSLHLGHAGSSPHALASPAFSTIFSFFNNNTVAVEESVPSGIAWMNDTASTIPPPATEAISAHKNNCLQGTGFLEEEITRVGVLFASKAVMQLLVNPFVGPLTNRIGYHIPMFAGFVIMFLSTVMFAFSGTYTLLFVARTLQGIGSSFSSVAGLGMLASVYTDDHERGRAMGTALGGLALGLLVGAPFGSVMYEFVGKSAPFLILAFLALLDGALQLCILQPSKVSPESAKGTPLFMLLKDPYILVAAGSICFANMGVAILEPTLPIWMMQTMCSPKWQLGLAFLPASVSYLIGTNLFGVLANKMGRWLCSLIGMLVVGTSLLCVPLAHNIFGLIGPNAGLGLAIGMVDSSMMPIMGHLVDLRHTSVYGSVYAIADVAFCMGFAIGPSTGGAIVKAIGFPWLMVITGVINIVYAPLCYYLRSPPAKEEKLAILSQDCPMETRMYATQKPTKEFPLGEDSDEEPDHEE.

Topologically, residues 1–21 (MLRTILDAPQRLLKEGRASRQ) are cytoplasmic. The chain crosses the membrane as a helical span at residues 22 to 42 (LVLVVVFVALLLDNMLFTVVV). The Lumenal, vesicle segment spans residues 43-138 (PIVPTFLYDM…TGFLEEEITR (96 aa)). Residues Asn-58, Asn-87, and Asn-104 are each glycosylated (N-linked (GlcNAc...) asparagine). A helical transmembrane segment spans residues 139-158 (VGVLFASKAVMQLLVNPFVG). Residues 159–167 (PLTNRIGYH) lie on the Cytoplasmic side of the membrane. Residues 168-188 (IPMFAGFVIMFLSTVMFAFSG) form a helical membrane-spanning segment. Residues 189 to 197 (TYTLLFVAR) lie on the Lumenal, vesicle side of the membrane. The chain crosses the membrane as a helical span at residues 198–218 (TLQGIGSSFSSVAGLGMLASV). Topologically, residues 219–227 (YTDDHERGR) are cytoplasmic. A helical membrane pass occupies residues 228–250 (AMGTALGGLALGLLVGAPFGSVM). Residues 251–256 (YEFVGK) are Lumenal, vesicle-facing. A helical transmembrane segment spans residues 257–279 (SAPFLILAFLALLDGALQLCILQ). Topologically, residues 280-299 (PSKVSPESAKGTPLFMLLKD) are cytoplasmic. The chain crosses the membrane as a helical span at residues 300–319 (PYILVAAGSICFANMGVAIL). The Lumenal, vesicle portion of the chain corresponds to 320 to 335 (EPTLPIWMMQTMCSPK). Residues 336-360 (WQLGLAFLPASVSYLIGTNLFGVLA) form a helical membrane-spanning segment. Over 361-365 (NKMGR) the chain is Cytoplasmic. The chain crosses the membrane as a helical span at residues 366 to 386 (WLCSLIGMLVVGTSLLCVPLA). Residues 387 to 397 (HNIFGLIGPNA) lie on the Lumenal, vesicle side of the membrane. The helical transmembrane segment at 398–418 (GLGLAIGMVDSSMMPIMGHLV) threads the bilayer. The Cytoplasmic segment spans residues 419 to 422 (DLRH). A helical membrane pass occupies residues 423-443 (TSVYGSVYAIADVAFCMGFAI). Topologically, residues 444-448 (GPSTG) are lumenal, vesicle. A helical transmembrane segment spans residues 449 to 470 (GAIVKAIGFPWLMVITGVINIV). The Cytoplasmic segment spans residues 471-525 (YAPLCYYLRSPPAKEEKLAILSQDCPMETRMYATQKPTKEFPLGEDSDEEPDHEE). Residues 503–525 (ATQKPTKEFPLGEDSDEEPDHEE) form a disordered region. Acidic residues predominate over residues 513–525 (LGEDSDEEPDHEE).

It belongs to the major facilitator superfamily. Vesicular transporter family. Expressed primarily in neuroendocrine tissues. Highly expressed in chromaffin cells of the adrenal medulla (at protein level). Detected in peripheral sympathetic ganglia (at protein level). Found in some paracrine cells in stomach and duodenum (at protein level). Expressed in substantia nigra. In terms of tissue distribution, expressed in gastrointestinal tract.

It localises to the cytoplasmic vesicle. Its subcellular location is the secretory vesicle membrane. The protein resides in the secretory vesicle. It is found in the synaptic vesicle membrane. The protein localises to the endoplasmic reticulum membrane. The catalysed reaction is serotonin(in) + 2 H(+)(out) = serotonin(out) + 2 H(+)(in). It carries out the reaction (R)-noradrenaline(in) + 2 H(+)(out) = (R)-noradrenaline(out) + 2 H(+)(in). The enzyme catalyses dopamine(in) + 2 H(+)(out) = dopamine(out) + 2 H(+)(in). Its activity is regulated as follows. Strongly inhibited by reserpine. Also inhibited to a lesser extent by ketanserin and fenfluramine. Not significantly inhibited by tetrabenazine. Its function is as follows. Electrogenic antiporter that exchanges one cationic monoamine with two intravesicular protons across the membrane of secretory and synaptic vesicles. Uses the electrochemical proton gradient established by the V-type proton-pump ATPase to accumulate high concentrations of monoamines inside the vesicles prior to their release via exocytosis. Transports catecholamines and indolamines with higher affinity for serotonin. Regulates the transvesicular monoaminergic gradient that determines the quantal size. Mediates presynaptic monoaminergic vesicle transport in the amygdala and prefrontal brain regions related with emotion processing in response to environmental stimuli. Unable to uptake serotonin. This is Chromaffin granule amine transporter (SLC18A1) from Homo sapiens (Human).